The chain runs to 467 residues: Phosphoglucosamine mutase (467 aa).

The active-site Phosphoserine intermediate is serine 120. Residues serine 120, aspartate 261, aspartate 263, and aspartate 265 each coordinate Mg(2+). Phosphoserine is present on serine 120.

It belongs to the phosphohexose mutase family. Requires Mg(2+) as cofactor. Activated by phosphorylation.

It catalyses the reaction alpha-D-glucosamine 1-phosphate = D-glucosamine 6-phosphate. Its function is as follows. Catalyzes the conversion of glucosamine-6-phosphate to glucosamine-1-phosphate. The polypeptide is Phosphoglucosamine mutase (Parafrankia sp. (strain EAN1pec)).